Reading from the N-terminus, the 108-residue chain is Small ribosomal subunit protein uS17 (108 aa).

The segment at 1 to 26 (MREKMAEATETQASETSTRGRPKTRV) is disordered. The segment covering 8 to 17 (ATETQASETS) has biased composition (low complexity).

This sequence belongs to the universal ribosomal protein uS17 family. Part of the 30S ribosomal subunit.

Functionally, one of the primary rRNA binding proteins, it binds specifically to the 5'-end of 16S ribosomal RNA. The polypeptide is Small ribosomal subunit protein uS17 (Myxococcus xanthus (strain DK1622)).